Here is a 485-residue protein sequence, read N- to C-terminus: Eukaryotic translation initiation factor 3 subunit E (485 aa).

A PCI domain is found at 219–391 (NQPDGPDGIV…GEIHITKPVT (173 aa)). Residues 444-485 (QGGGKSNKKGDYKKGDYKKGGDFKKGGDFKKGGDHKKRAWVK) are disordered. Residues 451 to 475 (KKGDYKKGDYKKGGDFKKGGDFKKG) show a composition bias toward basic and acidic residues. Basic residues predominate over residues 476-485 (GDHKKRAWVK).

The protein belongs to the eIF-3 subunit E family. As to quaternary structure, component of the eukaryotic translation initiation factor 3 (eIF-3) complex.

It localises to the cytoplasm. Component of the eukaryotic translation initiation factor 3 (eIF-3) complex, which is involved in protein synthesis of a specialized repertoire of mRNAs and, together with other initiation factors, stimulates binding of mRNA and methionyl-tRNAi to the 40S ribosome. The eIF-3 complex specifically targets and initiates translation of a subset of mRNAs involved in cell proliferation. The chain is Eukaryotic translation initiation factor 3 subunit E from Monosiga brevicollis (Choanoflagellate).